A 378-amino-acid chain; its full sequence is Acetylornithine deacetylase (378 aa).

Histidine 76 is a binding site for Zn(2+). The active site involves aspartate 78. Zn(2+) is bound at residue aspartate 108. Glutamate 140 is a catalytic residue. Zn(2+)-binding residues include glutamate 141, glutamate 165, and histidine 351.

The protein belongs to the peptidase M20A family. ArgE subfamily. In terms of assembly, homodimer. Zn(2+) serves as cofactor. The cofactor is Co(2+). It depends on glutathione as a cofactor.

The protein localises to the cytoplasm. It carries out the reaction N(2)-acetyl-L-ornithine + H2O = L-ornithine + acetate. It participates in amino-acid biosynthesis; L-arginine biosynthesis; L-ornithine from N(2)-acetyl-L-ornithine (linear): step 1/1. Catalyzes the hydrolysis of the amide bond of N(2)-acetylated L-amino acids. Cleaves the acetyl group from N-acetyl-L-ornithine to form L-ornithine, an intermediate in L-arginine biosynthesis pathway, and a branchpoint in the synthesis of polyamines. This Aliivibrio fischeri (strain ATCC 700601 / ES114) (Vibrio fischeri) protein is Acetylornithine deacetylase.